Consider the following 478-residue polypeptide: Secretogranin-3 (478 aa).

The signal sequence occupies residues 1–21 (MASKRLGFVVVLALVCQHINA). 2 disordered regions span residues 22–126 (FPTP…NGMD) and 208–287 (IGDR…EDGL). A compositionally biased stretch (basic and acidic residues) spans 28-42 (PDDKYNRELTEEKPL). The segment covering 63 to 74 (AEEETNSEDDDI) has biased composition (acidic residues). The span at 97 to 120 (ANERLGADDTDSTKNRRLADDYDS) shows a compositional bias: basic and acidic residues. The span at 235–259 (DEEDEVENEGGDDANGDEPQEEESR) shows a compositional bias: acidic residues.

Its subcellular location is the cytoplasmic vesicle. The protein localises to the secretory vesicle lumen. It localises to the secretory vesicle membrane. The protein resides in the secreted. The protein is Secretogranin-3 (scg3) of Danio rerio (Zebrafish).